Reading from the N-terminus, the 314-residue chain is Serine/threonine-protein phosphatase CPPED1 (314 aa).

S2 bears the Phosphoserine mark. A catalytic region spans residues 47–250 (KAWSTGDCDN…KVVFSGHYHR (204 aa)). 4 residues coordinate a divalent metal cation: D53, D90, N127, and H247. Phosphoserine is present on S294.

This sequence belongs to the metallophosphoesterase superfamily. CPPED1 family. A divalent metal cation serves as cofactor.

The protein localises to the cytoplasm. It carries out the reaction O-phospho-L-seryl-[protein] + H2O = L-seryl-[protein] + phosphate. The enzyme catalyses O-phospho-L-threonyl-[protein] + H2O = L-threonyl-[protein] + phosphate. Functionally, protein phosphatase that dephosphorylates AKT family kinase specifically at 'Ser-473', blocking cell cycle progression and promoting cell apoptosis. May play an inhibitory role in glucose uptake by adipocytes. In Pongo abelii (Sumatran orangutan), this protein is Serine/threonine-protein phosphatase CPPED1 (CPPED1).